The primary structure comprises 108 residues: UPF0060 membrane protein DSY4157 (108 aa).

A run of 4 helical transmembrane segments spans residues 6-26 (ILFI…WLWL), 31-51 (PYWY…IPTL), 60-80 (VYAA…WGVD), and 86-106 (TYDW…LWAP).

The protein belongs to the UPF0060 family.

It is found in the cell membrane. This is UPF0060 membrane protein DSY4157 from Desulfitobacterium hafniense (strain Y51).